An 89-amino-acid chain; its full sequence is Small ribosomal subunit protein uS15 (89 aa).

This sequence belongs to the universal ribosomal protein uS15 family. In terms of assembly, part of the 30S ribosomal subunit. Forms a bridge to the 50S subunit in the 70S ribosome, contacting the 23S rRNA.

Its function is as follows. One of the primary rRNA binding proteins, it binds directly to 16S rRNA where it helps nucleate assembly of the platform of the 30S subunit by binding and bridging several RNA helices of the 16S rRNA. Forms an intersubunit bridge (bridge B4) with the 23S rRNA of the 50S subunit in the ribosome. This is Small ribosomal subunit protein uS15 from Desulfotalea psychrophila (strain LSv54 / DSM 12343).